The sequence spans 65 residues: Small ribosomal subunit protein bS21 (65 aa).

A disordered region spans residues 45 to 65 (GRLKRSRSRRRAQRANEERNS). A compositionally biased stretch (basic residues) spans 48–57 (KRSRSRRRAQ).

Belongs to the bacterial ribosomal protein bS21 family.

The chain is Small ribosomal subunit protein bS21 from Pelodictyon phaeoclathratiforme (strain DSM 5477 / BU-1).